The sequence spans 102 residues: Small ribosomal subunit protein uS10 (102 aa).

It belongs to the universal ribosomal protein uS10 family. As to quaternary structure, part of the 30S ribosomal subunit.

Its function is as follows. Involved in the binding of tRNA to the ribosomes. The polypeptide is Small ribosomal subunit protein uS10 (Mesorhizobium japonicum (strain LMG 29417 / CECT 9101 / MAFF 303099) (Mesorhizobium loti (strain MAFF 303099))).